A 451-amino-acid chain; its full sequence is ATP synthase subunit beta (451 aa).

143-150 (GGAGVGKT) serves as a coordination point for ATP.

It belongs to the ATPase alpha/beta chains family. In terms of assembly, F-type ATPases have 2 components, CF(1) - the catalytic core - and CF(0) - the membrane proton channel. CF(1) has five subunits: alpha(3), beta(3), gamma(1), delta(1), epsilon(1). CF(0) has three main subunits: a(1), b(2) and c(9-12). The alpha and beta chains form an alternating ring which encloses part of the gamma chain. CF(1) is attached to CF(0) by a central stalk formed by the gamma and epsilon chains, while a peripheral stalk is formed by the delta and b chains.

The protein localises to the cell membrane. The catalysed reaction is ATP + H2O + 4 H(+)(in) = ADP + phosphate + 5 H(+)(out). In terms of biological role, produces ATP from ADP in the presence of a proton gradient across the membrane. The catalytic sites are hosted primarily by the beta subunits. This chain is ATP synthase subunit beta, found in Coprothermobacter proteolyticus (strain ATCC 35245 / DSM 5265 / OCM 4 / BT).